Here is a 122-residue protein sequence, read N- to C-terminus: Insulin-like growth factor 1 (122 aa).

The tract at residues 49-77 (GPETLCGAELVDALQFVCGDRGFYFNKPT) is b. Intrachain disulfides connect Cys-54/Cys-96, Cys-66/Cys-109, and Cys-95/Cys-100. The tract at residues 78-89 (GYGSSSRRAPQT) is c. The interval 90-110 (GIVDECCFRSCDLRRLEMYCA) is a. A d region spans residues 111–118 (PLKPAKSA). The propeptide at 119–122 (RSVR) is e peptide.

This sequence belongs to the insulin family. Forms a ternary complex with IGFR1 and ITGAV:ITGB3. Forms a ternary complex with IGFR1 and ITGA6:ITGB4. Forms a ternary complex with IGFBP3 and ALS.

The protein resides in the secreted. Its function is as follows. The insulin-like growth factors, isolated from plasma, are structurally and functionally related to insulin but have a much higher growth-promoting activity. May be a physiological regulator of [1-14C]-2-deoxy-D-glucose (2DG) transport and glycogen synthesis in osteoblasts. Stimulates glucose transport in bone-derived osteoblastic (PyMS) cells and is effective at much lower concentrations than insulin, not only regarding glycogen and DNA synthesis but also with regard to enhancing glucose uptake. May play a role in synapse maturation. Ca(2+)-dependent exocytosis of IGF1 is required for sensory perception of smell in the olfactory bulb. Acts as a ligand for IGF1R. Binds to the alpha subunit of IGF1R, leading to the activation of the intrinsic tyrosine kinase activity which autophosphorylates tyrosine residues in the beta subunit thus initiating a cascade of down-stream signaling events leading to activation of the PI3K-AKT/PKB and the Ras-MAPK pathways. Binds to integrins ITGAV:ITGB3 and ITGA6:ITGB4. Its binding to integrins and subsequent ternary complex formation with integrins and IGFR1 are essential for IGF1 signaling. Induces the phosphorylation and activation of IGFR1, MAPK3/ERK1, MAPK1/ERK2 and AKT1. As part of the MAPK/ERK signaling pathway, acts as a negative regulator of apoptosis in cardiomyocytes via promotion of STUB1/CHIP-mediated ubiquitination and degradation of ICER-type isoforms of CREM. The chain is Insulin-like growth factor 1 from Equus caballus (Horse).